Reading from the N-terminus, the 315-residue chain is Lipoyl synthase (315 aa).

The [4Fe-4S] cluster site is built by C63, C68, C74, C89, C93, C96, and S303. One can recognise a Radical SAM core domain in the interval F75 to V292.

Belongs to the radical SAM superfamily. Lipoyl synthase family. [4Fe-4S] cluster is required as a cofactor.

Its subcellular location is the cytoplasm. The enzyme catalyses [[Fe-S] cluster scaffold protein carrying a second [4Fe-4S](2+) cluster] + N(6)-octanoyl-L-lysyl-[protein] + 2 oxidized [2Fe-2S]-[ferredoxin] + 2 S-adenosyl-L-methionine + 4 H(+) = [[Fe-S] cluster scaffold protein] + N(6)-[(R)-dihydrolipoyl]-L-lysyl-[protein] + 4 Fe(3+) + 2 hydrogen sulfide + 2 5'-deoxyadenosine + 2 L-methionine + 2 reduced [2Fe-2S]-[ferredoxin]. Its pathway is protein modification; protein lipoylation via endogenous pathway; protein N(6)-(lipoyl)lysine from octanoyl-[acyl-carrier-protein]: step 2/2. Functionally, catalyzes the radical-mediated insertion of two sulfur atoms into the C-6 and C-8 positions of the octanoyl moiety bound to the lipoyl domains of lipoate-dependent enzymes, thereby converting the octanoylated domains into lipoylated derivatives. This is Lipoyl synthase from Chromobacterium violaceum (strain ATCC 12472 / DSM 30191 / JCM 1249 / CCUG 213 / NBRC 12614 / NCIMB 9131 / NCTC 9757 / MK).